Reading from the N-terminus, the 240-residue chain is Orotidine 5'-phosphate decarboxylase (240 aa).

Residues aspartate 10, lysine 33, 60 to 69, threonine 123, arginine 185, glutamine 194, glycine 214, and arginine 215 each bind substrate; that span reads DLKLHDIPNT. The active-site Proton donor is the lysine 62.

The protein belongs to the OMP decarboxylase family. Type 1 subfamily. Homodimer.

It carries out the reaction orotidine 5'-phosphate + H(+) = UMP + CO2. It functions in the pathway pyrimidine metabolism; UMP biosynthesis via de novo pathway; UMP from orotate: step 2/2. Its function is as follows. Catalyzes the decarboxylation of orotidine 5'-monophosphate (OMP) to uridine 5'-monophosphate (UMP). The chain is Orotidine 5'-phosphate decarboxylase from Lactobacillus delbrueckii subsp. bulgaricus (strain ATCC 11842 / DSM 20081 / BCRC 10696 / JCM 1002 / NBRC 13953 / NCIMB 11778 / NCTC 12712 / WDCM 00102 / Lb 14).